A 251-amino-acid polypeptide reads, in one-letter code: uncharacterized protein (251 aa).

Residues Ala-207 to Arg-251 form a disordered region.

This is an uncharacterized protein from Treponema pallidum (strain Nichols).